The chain runs to 104 residues: Secretoglobin family 3A member 1 (104 aa).

The signal sequence occupies residues 1–20 (MKLAALLGLCVALSCSSAAA).

The protein belongs to the secretoglobin family. UGRP subfamily. In terms of assembly, homodimer; disulfide-linked. Highly expressed in lung and prostate. Also found in mammary gland, spleen, pancreas, testis and liver. Detected throughout the airway epithelium in lung, with highest expression in large airways. Found in lung submucosal glands where it localizes to acinar and ductile cells. Not detected in respiratory bronchioles, alveolar ducts or alveolar epithelium. In mammary gland, specifically localizes to luminal epithelial cells.

Its subcellular location is the secreted. Its function is as follows. Secreted cytokine-like protein. Inhibits cell growth in vitro. The polypeptide is Secretoglobin family 3A member 1 (SCGB3A1) (Homo sapiens (Human)).